Here is a 178-residue protein sequence, read N- to C-terminus: Large ribosomal subunit protein uL5 (178 aa).

The protein belongs to the universal ribosomal protein uL5 family. In terms of assembly, part of the 50S ribosomal subunit; part of the 5S rRNA/L5/L18/L25 subcomplex. Contacts the 5S rRNA and the P site tRNA. Forms a bridge to the 30S subunit in the 70S ribosome.

Functionally, this is one of the proteins that bind and probably mediate the attachment of the 5S RNA into the large ribosomal subunit, where it forms part of the central protuberance. In the 70S ribosome it contacts protein S13 of the 30S subunit (bridge B1b), connecting the 2 subunits; this bridge is implicated in subunit movement. Contacts the P site tRNA; the 5S rRNA and some of its associated proteins might help stabilize positioning of ribosome-bound tRNAs. This chain is Large ribosomal subunit protein uL5, found in Syntrophomonas wolfei subsp. wolfei (strain DSM 2245B / Goettingen).